The primary structure comprises 110 residues: Large ribosomal subunit protein uL22 (110 aa).

This sequence belongs to the universal ribosomal protein uL22 family. In terms of assembly, part of the 50S ribosomal subunit.

Functionally, this protein binds specifically to 23S rRNA; its binding is stimulated by other ribosomal proteins, e.g. L4, L17, and L20. It is important during the early stages of 50S assembly. It makes multiple contacts with different domains of the 23S rRNA in the assembled 50S subunit and ribosome. The globular domain of the protein is located near the polypeptide exit tunnel on the outside of the subunit, while an extended beta-hairpin is found that lines the wall of the exit tunnel in the center of the 70S ribosome. The protein is Large ribosomal subunit protein uL22 of Shewanella denitrificans (strain OS217 / ATCC BAA-1090 / DSM 15013).